The sequence spans 572 residues: ATP-dependent lipid A-core flippase (572 aa).

5 consecutive transmembrane segments (helical) span residues 14–34, 55–75, 148–168, 249–269, and 272–292; these read IIPY…VAAL, VFFL…KGVL, IFLL…CFLI, MEII…SEVI, and SATP…YDPV. The ABC transmembrane type-1 domain maps to 22–304; the sequence is FIAMFAMIVV…VSQVNSTIQQ (283 aa). Positions 338 to 571 constitute an ABC transporter domain; sequence IEFHDVSFSY…EGEYQLLYNM (234 aa). Residue 370–377 coordinates ATP; the sequence is GPSGGGKT.

Belongs to the ABC transporter superfamily. Lipid exporter (TC 3.A.1.106) family. In terms of assembly, homodimer.

It localises to the cell inner membrane. The catalysed reaction is ATP + H2O + lipid A-core oligosaccharideSide 1 = ADP + phosphate + lipid A-core oligosaccharideSide 2.. Functionally, involved in lipopolysaccharide (LPS) biosynthesis. Translocates lipid A-core from the inner to the outer leaflet of the inner membrane. Transmembrane domains (TMD) form a pore in the inner membrane and the ATP-binding domain (NBD) is responsible for energy generation. This Desulfotalea psychrophila (strain LSv54 / DSM 12343) protein is ATP-dependent lipid A-core flippase.